The primary structure comprises 186 residues: Ribosome-recycling factor (186 aa).

This sequence belongs to the RRF family.

It is found in the cytoplasm. Responsible for the release of ribosomes from messenger RNA at the termination of protein biosynthesis. May increase the efficiency of translation by recycling ribosomes from one round of translation to another. In Paraburkholderia phymatum (strain DSM 17167 / CIP 108236 / LMG 21445 / STM815) (Burkholderia phymatum), this protein is Ribosome-recycling factor.